The following is a 440-amino-acid chain: Chromosomal replication initiator protein DnaA (440 aa).

The domain I, interacts with DnaA modulators stretch occupies residues 1–69; it reads MKERILQEIK…VKVVLGNDAT (69 aa). Residues 69–96 form a domain II region; sequence TFEITYEAFEPHSSYSEPLVKKRAVLLT. The domain III, AAA+ region stretch occupies residues 97–313; the sequence is PLNPDYTFEN…GAIIKLLVYK (217 aa). Gly-140, Gly-142, Lys-143, and Thr-144 together coordinate ATP. A domain IV, binds dsDNA region spans residues 314–440; sequence ETTGKEVDLK…GEISRRALSG (127 aa).

The protein belongs to the DnaA family. As to quaternary structure, oligomerizes as a right-handed, spiral filament on DNA at oriC.

It localises to the cytoplasm. In terms of biological role, plays an essential role in the initiation and regulation of chromosomal replication. ATP-DnaA binds to the origin of replication (oriC) to initiate formation of the DNA replication initiation complex once per cell cycle. Binds the DnaA box (a 9 base pair repeat at the origin) and separates the double-stranded (ds)DNA. Forms a right-handed helical filament on oriC DNA; dsDNA binds to the exterior of the filament while single-stranded (ss)DNA is stabiized in the filament's interior. The ATP-DnaA-oriC complex binds and stabilizes one strand of the AT-rich DNA unwinding element (DUE), permitting loading of DNA polymerase. After initiation quickly degrades to an ADP-DnaA complex that is not apt for DNA replication. Binds acidic phospholipids. The polypeptide is Chromosomal replication initiator protein DnaA (Thermotoga sp. (strain RQ2)).